The sequence spans 74 residues: MAGQYWRAAGITYLQYANICGTHVRNCLKEPFRAAAKNREGFISNTVMYQNGKESSTIILNSELLQKELLVKKN.

It belongs to the eukaryotic ATPase epsilon family. Component of the ATP synthase complex composed at least of ATP5F1A/subunit alpha, ATP5F1B/subunit beta, ATP5MC1/subunit c (homooctomer), MT-ATP6/subunit a, MT-ATP8/subunit 8, ATP5ME/subunit e, ATP5MF/subunit f, ATP5MG/subunit g, ATP5MK/subunit k, ATP5MJ/subunit j, ATP5F1C/subunit gamma, ATP5F1D/subunit delta, ATP5F1E/subunit epsilon, ATP5PF/subunit F6, ATP5PB/subunit b, ATP5PD/subunit d, ATP5PO/subunit OSCP. ATP synthase complex consists of a soluble F(1) head domain (subunits alpha(3) and beta(3)) - the catalytic core - and a membrane F(0) domain - the membrane proton channel (subunits c, a, 8, e, f, g, k and j). These two domains are linked by a central stalk (subunits gamma, delta, and epsilon) rotating inside the F1 region and a stationary peripheral stalk (subunits F6, b, d, and OSCP).

It is found in the mitochondrion. It localises to the mitochondrion inner membrane. In terms of biological role, subunit epsilon, of the mitochondrial membrane ATP synthase complex (F(1)F(0) ATP synthase or Complex V) that produces ATP from ADP in the presence of a proton gradient across the membrane which is generated by electron transport complexes of the respiratory chain. ATP synthase complex consist of a soluble F(1) head domain - the catalytic core - and a membrane F(1) domain - the membrane proton channel. These two domains are linked by a central stalk rotating inside the F(1) region and a stationary peripheral stalk. During catalysis, ATP synthesis in the catalytic domain of F(1) is coupled via a rotary mechanism of the central stalk subunits to proton translocation. In vivo, can only synthesize ATP although its ATP hydrolase activity can be activated artificially in vitro. May be essential for the assembly of F(1) and may play an important role in the incorporation of the hydrophobic subunit c into the F(1)-c oligomer rotor of the mitochondrial ATP synthase complex. The chain is ATP synthase F(1) complex subunit epsilon, mitochondrial from Dictyostelium discoideum (Social amoeba).